We begin with the raw amino-acid sequence, 402 residues long: Phosphoglycerate kinase (402 aa).

Substrate contacts are provided by residues Asp24 to Asn26, Arg40, His63 to Arg66, Arg122, and Arg155. ATP contacts are provided by residues Lys206, Gly297, Glu328, and Gly358–Ser361.

The protein belongs to the phosphoglycerate kinase family. Monomer.

It localises to the cytoplasm. It carries out the reaction (2R)-3-phosphoglycerate + ATP = (2R)-3-phospho-glyceroyl phosphate + ADP. It functions in the pathway carbohydrate degradation; glycolysis; pyruvate from D-glyceraldehyde 3-phosphate: step 2/5. This Prochlorococcus marinus (strain MIT 9515) protein is Phosphoglycerate kinase.